We begin with the raw amino-acid sequence, 533 residues long: Calcium/calmodulin-dependent protein kinase type II (533 aa).

Residues 18–26 (LGKGAFSVV) and Lys-41 contribute to the ATP site. Residue Asp-134 is the Proton acceptor of the active site. The residue at position 284 (Thr-284) is a Phosphothreonine; by autocatalysis. Polar residues-rich tracts occupy residues 316-345 (TSDS…QPTS) and 377-391 (PPST…SQTI). Disordered stretches follow at residues 316-347 (TSDS…TSPA) and 369-400 (LLNK…EKAQ).

The protein belongs to the protein kinase superfamily. CAMK Ser/Thr protein kinase family. CaMK subfamily. In terms of assembly, dodecamer. Subunits are tightly packed around a central ring-shaped scaffold with extensive contacts between the regulatory segment of one kinase and the catalytic domain of another enabling cooperative activation of a subunit by the adjacent molecule. Interacts with and phosphorylates daf-16; the interaction promotes daf-16 nuclear localization. Interacts with egl-2 and tir-1. Interacts with nsy-1. The cofactor is Mg(2+).

The protein localises to the cytoplasm. It is found in the cell projection. The protein resides in the axon. It localises to the perikaryon. The enzyme catalyses L-seryl-[protein] + ATP = O-phospho-L-seryl-[protein] + ADP + H(+). It carries out the reaction L-threonyl-[protein] + ATP = O-phospho-L-threonyl-[protein] + ADP + H(+). Its activity is regulated as follows. Ca(2+)/calmodulin binding removes an autoinhibitory regulatory segment located C-terminal to the kinase domain. This releases the catalytic activity of the enzyme and makes accessible a regulatory residue Thr-284. Phosphorylation of Thr-284 by another kinase domain within the oligomeric holoenzyme keeps CaMKII active in the absence of Ca(2+)/calmodulin by preventing the rebinding of the regulatory segment to the kinase domain and by increasing the affinity of calmodulin for the enzyme. Can respond to high-frequency Ca(2+) pulses to become Ca(2+) independent. Role in locomotion and neuronal cell fate specification. Required for the regulation of synaptic density, egg laying, defecation, and meiotic maturation. Required for viability under chronic osmotic stress in which it acts downstream of osr-1. Regulates the synaptic trafficking of glr-1. Bidirectional modulator of neurotransmitter release with negative modulatory effects mainly mediated via slo-1 activation. May suppress the functional response to an internal pacemaker, perhaps by modulating the activity of the IP3 receptor. This is Calcium/calmodulin-dependent protein kinase type II from Caenorhabditis briggsae.